Reading from the N-terminus, the 261-residue chain is uncharacterized protein (261 aa).

The interval 1 to 22 (MAETTEPPSDAGTSQADAMALA) is disordered. Residues 107-127 (IAMAAAVVIICGFTGLSGYIV) traverse the membrane as a helical segment.

To M.tuberculosis Rv1362c.

Its subcellular location is the membrane. This is an uncharacterized protein from Mycobacterium tuberculosis (strain ATCC 25618 / H37Rv).